The chain runs to 540 residues: Chaperonin GroEL (540 aa).

ATP is bound by residues 30 to 33, lysine 51, 87 to 91, glycine 415, 479 to 481, and aspartate 495; these read TLGP, DGTTT, and NAA.

It belongs to the chaperonin (HSP60) family. Forms a cylinder of 14 subunits composed of two heptameric rings stacked back-to-back. Interacts with the co-chaperonin GroES.

The protein resides in the cytoplasm. It carries out the reaction ATP + H2O + a folded polypeptide = ADP + phosphate + an unfolded polypeptide.. Its function is as follows. Together with its co-chaperonin GroES, plays an essential role in assisting protein folding. The GroEL-GroES system forms a nano-cage that allows encapsulation of the non-native substrate proteins and provides a physical environment optimized to promote and accelerate protein folding. The polypeptide is Chaperonin GroEL (Raoultella ornithinolytica (Klebsiella ornithinolytica)).